The chain runs to 261 residues: 3-deoxy-manno-octulosonate cytidylyltransferase (261 aa).

It belongs to the KdsB family.

It localises to the cytoplasm. The enzyme catalyses 3-deoxy-alpha-D-manno-oct-2-ulosonate + CTP = CMP-3-deoxy-beta-D-manno-octulosonate + diphosphate. The protein operates within nucleotide-sugar biosynthesis; CMP-3-deoxy-D-manno-octulosonate biosynthesis; CMP-3-deoxy-D-manno-octulosonate from 3-deoxy-D-manno-octulosonate and CTP: step 1/1. It participates in bacterial outer membrane biogenesis; lipopolysaccharide biosynthesis. Functionally, activates KDO (a required 8-carbon sugar) for incorporation into bacterial lipopolysaccharide in Gram-negative bacteria. The protein is 3-deoxy-manno-octulosonate cytidylyltransferase of Marinobacter nauticus (strain ATCC 700491 / DSM 11845 / VT8) (Marinobacter aquaeolei).